Reading from the N-terminus, the 561-residue chain is MQIRVPQRNRGRTFPHRSSHRRTPIHILEFLAAQPLLTLALILAVGLLIGKIRFFGISLGAAAVLFVALALSTVDPALQLPPLVYQLGLAMFVYAIGLSAGSEFFAEFRHRGWKLTLFMIGLLMLMMAVAYGIIKLFGLDEIIGAGMFAGALSSTPGMAAMVEMLEGIDDSVASEPVVGYSLAYPGAVIGSILVAAIGAKLMKVNHAADAAEEGLVSDPLEWTGVRIGPGINGTIAQLPTLAGEEIIATRVVHSKTFHSLAAPNDRLHEGMVLVIHGTPDALERAIAKVGKQQDVPIEDTDLVYSRFTVSSKAVVGRKISDLDTVRSGFIISRLRRGDADVVPEPDDVLHYSDRVRVIAPANRMSEVRRFLGDSERSLADVDLMPFAFGLVIGLAIGVIPIPLPGGNTLSLGFGGGPIVAGLILGALNRTGPIHWQMPYHASRTISTFGLAIFLAGVGTSAGVGFRQALTDPASLTVIAGGFIVTISSALVCALVCMPLFKLKWDEAMGVAAGCTTNPAIISYLNGQTGTELATRGYATVYPTAMIGKIIASQMLLLALIA.

6 consecutive transmembrane segments (helical) span residues 27–49 (ILEF…GLLI), 54–71 (FFGI…ALAL), 83–105 (LVYQ…SEFF), 115–137 (LTLF…IKLF), 142–162 (IIGA…AAMV), and 177–199 (VVGY…AIGA). Positions 292–373 (QQDVPIEDTD…MSEVRRFLGD (82 aa)) constitute an RCK C-terminal domain. A run of 4 helical transmembrane segments spans residues 383-405 (LMPF…PLPG), 409-428 (LSLG…GALN), 441-463 (ASRT…SAGV), and 478-500 (IAGG…MPLF).

This sequence belongs to the AAE transporter (TC 2.A.81) family.

The protein localises to the cell membrane. This is an uncharacterized protein from Corynebacterium diphtheriae (strain ATCC 700971 / NCTC 13129 / Biotype gravis).